The sequence spans 590 residues: Negative elongation factor D (590 aa).

Residues Phe-15 to Val-43 are disordered. A compositionally biased stretch (acidic residues) spans Trp-21 to Val-43.

The protein belongs to the NELF-D family. As to quaternary structure, the NELF complex is composed of NELFA, NELFB, NELFCD and NELFE; NELFA and NELFCD form a stable subcomplex that binds primarily through NELFCD to the N-terminus of NELFB. Binds RNA which may help to stabilize the NELF complex on nucleic acid. In vitro, the NELFA:NELFCD subcomplex binds to ssDNA and ssRNA in a sequence- and structure-dependent manner. Interacts with ARAF1. Interacts with PCF11. Interacts with NELFB. Interacts with KAT8.

The protein localises to the nucleus. Essential component of the NELF complex, a complex that negatively regulates the elongation of transcription by RNA polymerase II. The NELF complex, which acts via an association with the DSIF complex and causes transcriptional pausing, is counteracted by the P-TEFb kinase complex. The polypeptide is Negative elongation factor D (NELFCD) (Sus scrofa (Pig)).